The sequence spans 179 residues: Bifunctional protein PyrR (179 aa).

Substrate contacts are provided by residues 39-40 (RR), 101-109 (DDVLFTGRT), R134, and V158. The PRPP-binding motif lies at 97-109 (VILIDDVLFTGRT).

This sequence belongs to the purine/pyrimidine phosphoribosyltransferase family. PyrR subfamily.

The enzyme catalyses UMP + diphosphate = 5-phospho-alpha-D-ribose 1-diphosphate + uracil. Its function is as follows. Regulates the transcription of the pyrimidine nucleotide (pyr) operon in response to exogenous pyrimidines. Functionally, also displays a weak uracil phosphoribosyltransferase activity which is not physiologically significant. The polypeptide is Bifunctional protein PyrR (Haemophilus ducreyi (strain 35000HP / ATCC 700724)).